We begin with the raw amino-acid sequence, 802 residues long: Osmosensitive cation channel TMEM63C (802 aa).

The Extracellular portion of the chain corresponds to 1 to 35; that stretch reads MSAFPDSMDQKFHNMTVNECFQSRSTVLQGQPFGG. The chain crosses the membrane as a helical span at residues 36–60; the sequence is IPTVLVLNIILWVFVVLLYSFLRKA. Over 61–124 the chain is Cytoplasmic; it reads AWDYGRLALL…RDRDLINKCG (64 aa). Residues S75 and S78 each carry the phosphoserine modification. Residues 125-157 form a helical membrane-spanning segment; sequence DDARIYITFQYHLIIFVLILCIPSLGIILPVNY. Topologically, residues 158–180 are extracellular; it reads IGTVLDWNSHFGRTTIVNVSTES. The helical transmembrane segment at 181-205 threads the bilayer; that stretch reads KFLWLHSLFAFLYFLINLAFMGHHC. Over 206 to 401 the chain is Cytoplasmic; that stretch reads LGFVPKKSLH…IIWKHLSIRR (196 aa). The chain crosses the membrane as a helical span at residues 402–431; it reads FSWWTRFIAINTFLFFLFFFLTTPAIIINT. Topologically, residues 432–446 are extracellular; that stretch reads IDIYNVTRPIEKLQS. Residues 447 to 476 traverse the membrane as a helical segment; that stretch reads PIVTQFFPSVLLWAFTVTMPLLVYLSAFLE. The Cytoplasmic segment spans residues 477 to 480; the sequence is AHWT. The chain crosses the membrane as a helical span at residues 481-517; sequence RSSQNLIIVHKCYIFLVFMVVILPSMGLTSLHVFLRW. The Extracellular portion of the chain corresponds to 518-540; that stretch reads LFDIYYLEHATIRFQCVFLPDNG. Residues 541 to 573 form a helical membrane-spanning segment; sequence AFFINYVITAALLGTGMELMRLGSLCTYCTRLF. Residues 574–593 lie on the Cytoplasmic side of the membrane; it reads LSKSEPERVHIRKNQATDFQ. Residues 594-612 traverse the membrane as a helical segment; it reads FGREYAWMLNVFSVVMAYS. Residues 613-615 lie on the Extracellular side of the membrane; the sequence is ITC. The helical transmembrane segment at 616–640 threads the bilayer; it reads PIIVPFGLLYLCMKHITDRYNMYYS. At 641–647 the chain is on the cytoplasmic side; sequence YAPTKLN. Residues 648 to 676 traverse the membrane as a helical segment; sequence AQIHMAAVYQAIFAPLLGLFWMLFFSILR. Over 677–681 the chain is Extracellular; sequence VGSLH. The chain crosses the membrane as a helical span at residues 682-702; the sequence is SITLFSMSSLIISVVIAFSGV. Residues 703 to 802 are Cytoplasmic-facing; sequence FLGKLRIAQR…EGLEMEGQSH (100 aa). Positions 753–785 are disordered; it reads TPASSPARHTYGTINSQPEEGEEESGLRGFARE.

The protein belongs to the CSC1 (TC 1.A.17) family. In terms of assembly, monomer.

The protein resides in the endoplasmic reticulum membrane. The protein localises to the cell membrane. It catalyses the reaction Ca(2+)(in) = Ca(2+)(out). Functionally, acts as an osmosensitive cation channel preferentially activated upon hypotonic stress. In contrast to TMEM63B, does not show phospholipid scramblase activity. Enriched in mitochondria-ER contact sites where it may regulate the metabolite flux and organelles' morphologies in response to osmotic changes. In particular may regulate mitochondrial motility and function in motor neuron axons. Required for the functional integrity of the kidney glomerular filtration barrier. This is Osmosensitive cation channel TMEM63C from Mus musculus (Mouse).